Consider the following 488-residue polypeptide: Glutamyl-tRNA(Gln) amidotransferase subunit A (488 aa).

Active-site charge relay system residues include Lys-77 and Ser-152. The Acyl-ester intermediate role is filled by Ser-176.

It belongs to the amidase family. GatA subfamily. Heterotrimer of A, B and C subunits.

It catalyses the reaction L-glutamyl-tRNA(Gln) + L-glutamine + ATP + H2O = L-glutaminyl-tRNA(Gln) + L-glutamate + ADP + phosphate + H(+). In terms of biological role, allows the formation of correctly charged Gln-tRNA(Gln) through the transamidation of misacylated Glu-tRNA(Gln) in organisms which lack glutaminyl-tRNA synthetase. The reaction takes place in the presence of glutamine and ATP through an activated gamma-phospho-Glu-tRNA(Gln). This Streptococcus thermophilus (strain CNRZ 1066) protein is Glutamyl-tRNA(Gln) amidotransferase subunit A.